A 306-amino-acid chain; its full sequence is Ubiquitin-conjugating enzyme E2Q-like protein CG4502 (306 aa).

The tract at residues 18-77 (HKSSNNNNNNNNNHNNNINNNNNNDKVDGATGSSPNINNNNNNNNNNNNHDGAAAPSSAG) is disordered. 2 stretches are compositionally biased toward low complexity: residues 22 to 41 (NNNN…NNNN) and 53 to 77 (NINN…SSAG). Residues 138–299 (IRTRRLMKEY…VKTHEKYGWV (162 aa)) enclose the UBC core domain. The Glycyl thioester intermediate role is filled by cysteine 234.

This sequence belongs to the ubiquitin-conjugating enzyme family.

It catalyses the reaction S-ubiquitinyl-[E1 ubiquitin-activating enzyme]-L-cysteine + [E2 ubiquitin-conjugating enzyme]-L-cysteine = [E1 ubiquitin-activating enzyme]-L-cysteine + S-ubiquitinyl-[E2 ubiquitin-conjugating enzyme]-L-cysteine.. The protein operates within protein modification; protein ubiquitination. In terms of biological role, catalyzes the covalent attachment of ubiquitin to other proteins. In Drosophila melanogaster (Fruit fly), this protein is Ubiquitin-conjugating enzyme E2Q-like protein CG4502.